Consider the following 622-residue polypeptide: Chaperone protein HtpG (622 aa).

The interval 1 to 322 is a; substrate-binding; that stretch reads MTEAKNYEFQ…SEDLPLNISR (322 aa). The segment at 323–539 is b; the sequence is QSLQDNALVS…DGFMSASMER (217 aa). The segment at 540–622 is c; sequence VLAASRKEQG…KILDRAVSRA (83 aa).

The protein belongs to the heat shock protein 90 family. Homodimer.

Its subcellular location is the cytoplasm. Functionally, molecular chaperone. Has ATPase activity. This Desulfotalea psychrophila (strain LSv54 / DSM 12343) protein is Chaperone protein HtpG.